The sequence spans 226 residues: Fibrillarin-like rRNA/tRNA 2'-O-methyltransferase (226 aa).

S-adenosyl-L-methionine contacts are provided by residues 85 to 86 (TT), 104 to 105 (EF), 129 to 130 (DA), and 149 to 152 (DVAQ).

The protein belongs to the methyltransferase superfamily. Fibrillarin family. In terms of assembly, interacts with nop5. Component of box C/D small ribonucleoprotein (sRNP) particles that contain rpl7ae, FlpA and nop5, plus a guide RNA.

Functionally, involved in pre-rRNA and tRNA processing. Utilizes the methyl donor S-adenosyl-L-methionine to catalyze the site-specific 2'-hydroxyl methylation of ribose moieties in rRNA and tRNA. Site specificity is provided by a guide RNA that base pairs with the substrate. Methylation occurs at a characteristic distance from the sequence involved in base pairing with the guide RNA. The chain is Fibrillarin-like rRNA/tRNA 2'-O-methyltransferase from Thermococcus gammatolerans (strain DSM 15229 / JCM 11827 / EJ3).